A 106-amino-acid chain; its full sequence is NADH dehydrogenase [ubiquinone] iron-sulfur protein 5 (106 aa).

The 45-residue stretch at 30-74 folds into the CHCH domain; the sequence is APRCHAFEKEWIECAHGIGAIRAEKECKIEYDDFIECLLRQKTMR. Short sequence motifs (cx9C motif) lie at residues 33–43 and 56–66; these read CHAFEKEWIEC and CKIEYDDFIEC. Intrachain disulfides connect C33–C66 and C43–C56. A disordered region spans residues 87 to 106; the sequence is IKEGKYTPPPHHIGKGEPRP.

This sequence belongs to the complex I NDUFS5 subunit family. As to quaternary structure, mammalian complex I is composed of 45 different subunits. This is a component of the iron-sulfur (IP) fragment of the enzyme.

It is found in the mitochondrion inner membrane. The protein localises to the mitochondrion intermembrane space. Accessory subunit of the mitochondrial membrane respiratory chain NADH dehydrogenase (Complex I), that is believed not to be involved in catalysis. Complex I functions in the transfer of electrons from NADH to the respiratory chain. The immediate electron acceptor for the enzyme is believed to be ubiquinone. This chain is NADH dehydrogenase [ubiquinone] iron-sulfur protein 5 (NDUFS5), found in Macaca fascicularis (Crab-eating macaque).